Consider the following 549-residue polypeptide: Manganese transporter SMF2 (549 aa).

The segment at 1 to 23 is disordered; the sequence is MTSQEYEPIQWSDESQTNNDSVN. A compositionally biased stretch (polar residues) spans 12–22; sequence SDESQTNNDSV. Helical transmembrane passes span 91–109, 130–147, 161–185, 196–214, 312–332, 350–372, 432–452, and 521–541; these read LLFSVLVSNFMAAFWQYLC, FGLNITLYILAEMAIIAT, ILFHIPLALGVILTVVDVLIVLLAY, IFEAFVSLLVVLTVVCFTV, LLISLFTVALFVNCAILIVSG, IYNLLCSTLSKGAGTVFVLALLF, ASQVVLSLLLPFVSAPLLYFT, and VLAIIVWLIISGLNFYMLLGF.

It belongs to the NRAMP family.

Its subcellular location is the vacuole lumen. The protein resides in the vesicle. The protein localises to the cell membrane. It carries out the reaction Mn(2+)(in) = Mn(2+)(out). Its function is as follows. High-affinity manganese transporter involved in manganese uptake from the extracellular environment. The chain is Manganese transporter SMF2 (SMF2) from Saccharomyces cerevisiae (strain ATCC 204508 / S288c) (Baker's yeast).